Consider the following 162-residue polypeptide: Caveolin-2 (162 aa).

Topologically, residues 1–86 (MGLETEKADV…FEISKYVMYK (86 aa)) are cytoplasmic. Tyr19 is subject to Phosphotyrosine; by SRC. Ser20 and Ser23 each carry phosphoserine. At Tyr27 the chain carries Phosphotyrosine; by SRC. A Phosphoserine modification is found at Ser36. Residues 87–107 (FLTVFLAIPLAFIAGILFATL) constitute an intramembrane region (helical). Over 108–162 (SCLHIWILMPFVKTCLMVLPSVQTIWKSVTDVFIAPLCTSIGRSFSSVSLQLSQD) the chain is Cytoplasmic.

It belongs to the caveolin family. As to quaternary structure, monomer or homodimer. Interacts with CAV1; the interaction forms a stable heterooligomeric complex that is required for targeting to lipid rafts and for caveolae formation. Tyrosine phosphorylated forms do not form heterooligomers with the Tyr-19-phosphorylated form existing as a monomer or dimer, and the Tyr-27-form as a monomer only. Interacts (tyrosine phosphorylated form) with the SH2 domain-containing proteins, RASA1, NCK1 and SRC. Interacts (tyrosine phosphorylated form) with INSR, the interaction (Tyr-27-phosphorylated form) is increased on insulin stimulation. Interacts (Tyr-19 phosphorylated form) with MAPK1 (phosphorylated form); the interaction, promoted by insulin, leads to nuclear location and MAPK1 activation. Interacts with STAT3; the interaction is increased on insulin-induced tyrosine phosphorylation leading to STAT activation. Phosphorylated on serine and tyrosine residues. CAV1 promotes phosphorylation on Ser-23 which then targets the complex to the plasma membrane, lipid rafts and caveolae. Phosphorylation on Ser-36 appears to modulate mitosis in endothelial cells. Phosphorylation on both Tyr-19 and Tyr-27 is required for insulin-induced 'Ser-727' phosphorylation of STAT3 and its activation. Phosphorylation on Tyr-19 is required for insulin-induced phosphorylation of MAPK1 and DNA binding of STAT3. Tyrosine phosphorylation is induced by both EGF and insulin (By. similarity).

The protein resides in the nucleus. Its subcellular location is the cytoplasm. It is found in the golgi apparatus membrane. It localises to the cell membrane. The protein localises to the membrane. The protein resides in the caveola. May act as a scaffolding protein within caveolar membranes. Interacts directly with G-protein alpha subunits and can functionally regulate their activity. Acts as an accessory protein in conjunction with CAV1 in targeting to lipid rafts and driving caveolae formation. The Ser-36 phosphorylated form has a role in modulating mitosis in endothelial cells. Positive regulator of cellular mitogenesis of the MAPK signaling pathway. Required for the insulin-stimulated nuclear translocation and activation of MAPK1 and STAT3, and the subsequent regulation of cell cycle progression. This is Caveolin-2 (CAV2) from Papio anubis (Olive baboon).